A 447-amino-acid chain; its full sequence is Tubulin beta-2 chain (447 aa).

Glutamine 11, glutamate 69, serine 138, glycine 142, threonine 143, glycine 144, asparagine 204, and asparagine 226 together coordinate GTP. Residue glutamate 69 coordinates Mg(2+). Residues 426–447 (QDAGVDEEEEEYEDDAPLEEEV) are disordered. The span at 429–447 (GVDEEEEEYEDDAPLEEEV) shows a compositional bias: acidic residues.

This sequence belongs to the tubulin family. Dimer of alpha and beta chains. A typical microtubule is a hollow water-filled tube with an outer diameter of 25 nm and an inner diameter of 15 nM. Alpha-beta heterodimers associate head-to-tail to form protofilaments running lengthwise along the microtubule wall with the beta-tubulin subunit facing the microtubule plus end conferring a structural polarity. Microtubules usually have 13 protofilaments but different protofilament numbers can be found in some organisms and specialized cells. Mg(2+) is required as a cofactor.

It is found in the cytoplasm. It localises to the cytoskeleton. In terms of biological role, tubulin is the major constituent of microtubules, a cylinder consisting of laterally associated linear protofilaments composed of alpha- and beta-tubulin heterodimers. Microtubules grow by the addition of GTP-tubulin dimers to the microtubule end, where a stabilizing cap forms. Below the cap, tubulin dimers are in GDP-bound state, owing to GTPase activity of alpha-tubulin. The protein is Tubulin beta-2 chain (TUB2) of Colletotrichum graminicola (Maize anthracnose fungus).